The following is a 596-amino-acid chain: Aspartate--tRNA(Asp/Asn) ligase (596 aa).

Residue Glu-175 participates in L-aspartate binding. The aspartate stretch occupies residues 199–202 (QQYK). Positions 221 and 454 each coordinate L-aspartate. Residue 221 to 223 (RDE) coordinates ATP. Glu-488 contacts ATP. Residue Arg-495 coordinates L-aspartate. ATP is bound at residue 540-543 (GVDR).

Belongs to the class-II aminoacyl-tRNA synthetase family. Type 1 subfamily. Homodimer.

The protein localises to the cytoplasm. It catalyses the reaction tRNA(Asx) + L-aspartate + ATP = L-aspartyl-tRNA(Asx) + AMP + diphosphate. In terms of biological role, aspartyl-tRNA synthetase with relaxed tRNA specificity since it is able to aspartylate not only its cognate tRNA(Asp) but also tRNA(Asn). Reaction proceeds in two steps: L-aspartate is first activated by ATP to form Asp-AMP and then transferred to the acceptor end of tRNA(Asp/Asn). The chain is Aspartate--tRNA(Asp/Asn) ligase from Bartonella bacilliformis (strain ATCC 35685 / KC583 / Herrer 020/F12,63).